The chain runs to 343 residues: Aspartate carbamoyltransferase catalytic subunit (343 aa).

Carbamoyl phosphate-binding residues include R91 and T92. K119 contacts L-aspartate. Carbamoyl phosphate is bound by residues R141, H171, and Q174. The L-aspartate site is built by R204 and R259. 2 residues coordinate carbamoyl phosphate: G300 and P301.

This sequence belongs to the aspartate/ornithine carbamoyltransferase superfamily. ATCase family. In terms of assembly, heterododecamer (2C3:3R2) of six catalytic PyrB chains organized as two trimers (C3), and six regulatory PyrI chains organized as three dimers (R2).

The enzyme catalyses carbamoyl phosphate + L-aspartate = N-carbamoyl-L-aspartate + phosphate + H(+). It participates in pyrimidine metabolism; UMP biosynthesis via de novo pathway; (S)-dihydroorotate from bicarbonate: step 2/3. Its function is as follows. Catalyzes the condensation of carbamoyl phosphate and aspartate to form carbamoyl aspartate and inorganic phosphate, the committed step in the de novo pyrimidine nucleotide biosynthesis pathway. The protein is Aspartate carbamoyltransferase catalytic subunit of Burkholderia mallei (strain NCTC 10247).